A 303-amino-acid chain; its full sequence is Uricase (303 aa).

Active-site charge relay system residues include Lys-12 and Thr-60. Positions 60, 61, 162, 179, 234, 235, and 261 each coordinate urate. His-263 (charge relay system) is an active-site residue. Residues 301-303 (TKL) carry the Microbody targeting signal motif.

The protein belongs to the uricase family.

It is found in the peroxisome. It catalyses the reaction urate + O2 + H2O = 5-hydroxyisourate + H2O2. The protein operates within purine metabolism; urate degradation; (S)-allantoin from urate: step 1/3. Its function is as follows. Catalyzes the oxidation of uric acid to 5-hydroxyisourate, which is further processed to form (S)-allantoin. The sequence is that of Uricase from Cyberlindnera jadinii (Torula yeast).